A 495-amino-acid chain; its full sequence is Dihydrolipoyl dehydrogenase, mitochondrial (495 aa).

Residues 59-68 (EKNATLGGTC), lysine 77, and 169-171 (SGS) each bind FAD. A disulfide bond links cysteine 68 and cysteine 73. Residues 206–213 (GAGVIGLE), glutamate 229, valine 264, and glycine 299 contribute to the NAD(+) site. Residues aspartate 340 and 346 to 349 (MLAH) each bind FAD. The active-site Proton acceptor is histidine 472.

It belongs to the class-I pyridine nucleotide-disulfide oxidoreductase family. Requires FAD as cofactor.

It localises to the mitochondrion matrix. It catalyses the reaction N(6)-[(R)-dihydrolipoyl]-L-lysyl-[protein] + NAD(+) = N(6)-[(R)-lipoyl]-L-lysyl-[protein] + NADH + H(+). The protein is Dihydrolipoyl dehydrogenase, mitochondrial (dld-1) of Caenorhabditis elegans.